The sequence spans 344 residues: Protein POLAR LOCALIZATION DURING ASYMMETRIC DIVISION AND REDISTRIBUTION (344 aa).

Position 19 is a phosphothreonine; by ASK7 (Thr-19). At Ser-79 the chain carries Phosphoserine; by ASK7. Thr-84 and Thr-86 each carry phosphothreonine; by ASK7. A phosphoserine; by ASK7 mark is found at Ser-91 and Ser-94. Phosphothreonine; by ASK7 is present on residues Thr-193, Thr-217, and Thr-233. Residue Ser-235 is modified to Phosphoserine; by ASK7. Residues 262-297 (LETRQQEELVKLETALNRVERRLQEKETEVSWWKDA) adopt a coiled-coil conformation. 5 positions are modified to phosphoserine; by ASK7: Ser-308, Ser-309, Ser-320, Ser-321, and Ser-336.

As to quaternary structure, component of a complex made of POLAR, BASL, ASK7/BIN2 and ASK3/SK12. Interacts with BASL, ASK7/BIN2 and ASK3/SK12. Phosphorylation by ASK7/BIN2 is increases turnover. Expressed in stomatal lineage cells with asymmetric division potential.

It is found in the cytoplasm. The protein resides in the cell cortex. Regulates asymmetric cell division (ACD), especially in stomatal-lineage cells. Acts as a stomatal lineage scaffold which regulates subcellular localization and transient polarization of kinases (e.g. ASK7/BIN2 and ASK3/SK12) involved in ACD in a BASL-dependent manner. Promotes the differentiation of both pavement cells and stomata. This is Protein POLAR LOCALIZATION DURING ASYMMETRIC DIVISION AND REDISTRIBUTION from Arabidopsis thaliana (Mouse-ear cress).